Reading from the N-terminus, the 61-residue chain is Large ribosomal subunit protein uL30 (61 aa).

It belongs to the universal ribosomal protein uL30 family. As to quaternary structure, part of the 50S ribosomal subunit.

This is Large ribosomal subunit protein uL30 from Chlorobium phaeobacteroides (strain BS1).